A 96-amino-acid chain; its full sequence is Bacterial microcompartment shell protein EutM (96 aa).

The BMC domain maps to 3–87; it reads ALGMIETRGL…PHGDLEEVFP (85 aa).

Belongs to the bacterial microcompartments protein family. In terms of assembly, homohexamer with a central pore of up to 8.6 Angstroms diameter. The hexamers pack into a two-dimensional array. Interacts with EutQ; a probably cytoplasm-facing helix (Val-49 to Gln-64) interacts with N-terminus of EutQ.

It localises to the bacterial microcompartment. It participates in amine and polyamine degradation; ethanolamine degradation. Probably a major component of the bacterial microcompartment (BMC) shell dedicated to ethanolamine degradation. Each homohexamer has a central pore with an opening of up to 8.6 Angstroms. A positively-charged funnel leads to the pore from each side of the hexamer. The pore probably allows metabolite passage into and out of the BMC. Expression of eutK, eutL, eutM, eutN, eutS (eutSMNLK) in E.coli leads to formation of a single BMC. Expression alone leads to thick filaments that interfere with cell separation. Coexpression of eutQ with eutSMNLK permits E.coli to make cells with more than one mobile BMC, as is usual in vivo. May play a role in BMC shell biogenesis. Can replace homolog pduA in the pdu operon, cells grow better than wild-type on 1,2-propanediol and vitamin B12. Protein is incorporated into the pdu BMC microcompartment. In terms of biological role, the ethanolamine (EA) catabolic bacterial microcompartment (BMC) probably concentrates low levels of ethanolamine catabolic enzymes, concentrates volatile reaction intermediates, keeps the level of toxic acetaldehyde low, generates enough acetyl-CoA to support cell growth, and maintains a pool of free coenzyme A (CoA) and NAD. Deletion of BMC genes (eutK, eutL, eutM) restores growth of eutD deletions, suggesting there are dedicated pools of coenzyme A (CoA) and NAD in the BMC. Its function is as follows. Expression of the eut operon allows this bacteria to use ethanolamine as a carbon, nitrogen and energy source. It relies on cobalamin (vitamin B12) both as a cofactor for the ethanolamine ammonia-lyase (EAL) activity and to induce the operon. EA enhances bacterial survival in macrophages in a concentration-dependent manner, suggesting it is an important nutrient during infection. This chain is Bacterial microcompartment shell protein EutM, found in Salmonella typhimurium (strain LT2 / SGSC1412 / ATCC 700720).